Consider the following 681-residue polypeptide: Methionine--tRNA ligase (681 aa).

The 'HIGH' region signature appears at 14–24; it reads PYANGSIHLGH. Cys-145, Cys-148, Cys-158, and Cys-161 together coordinate Zn(2+). The 'KMSKS' region motif lies at 331–335; sequence KMSKS. Lys-334 lines the ATP pocket. In terms of domain architecture, tRNA-binding spans 579–681; sequence TFAAVDLRVA…SGAKPGQRIK (103 aa).

The protein belongs to the class-I aminoacyl-tRNA synthetase family. MetG type 1 subfamily. In terms of assembly, homodimer. The cofactor is Zn(2+).

Its subcellular location is the cytoplasm. The enzyme catalyses tRNA(Met) + L-methionine + ATP = L-methionyl-tRNA(Met) + AMP + diphosphate. Its function is as follows. Is required not only for elongation of protein synthesis but also for the initiation of all mRNA translation through initiator tRNA(fMet) aminoacylation. The protein is Methionine--tRNA ligase of Pseudomonas putida (strain W619).